A 109-amino-acid polypeptide reads, in one-letter code: uncharacterized protein (109 aa).

An N-terminal signal peptide occupies residues 1-28; sequence MNMLAYFLYCRQLLLAVVLIEFPPRLCG.

This is an uncharacterized protein from Homo sapiens (Human).